Reading from the N-terminus, the 368-residue chain is F-box only protein 28 (368 aa).

A compositionally biased stretch (basic and acidic residues) spans 1-11; the sequence is MAAAAEERMAE. The disordered stretch occupies residues 1 to 56; it reads MAAAAEERMAEEGGGGQGDGGSSLASGSTQRQPPPPAPQHPQPGSQALPAPALAPD. The span at 12 to 21 shows a compositional bias: gly residues; that stretch reads EGGGGQGDGG. Low complexity predominate over residues 22–31; it reads SSLASGSTQR. Positions 32–41 are enriched in pro residues; it reads QPPPPAPQHP. Low complexity predominate over residues 42-56; sequence QPGSQALPAPALAPD. In terms of domain architecture, F-box spans 61–109; that stretch reads NNTLVALPIVAIENILSFMSYDEISQLRLVCKRMDLVCQRMLNQGFLKV. Residues Ser235 and Ser242 each carry the phosphoserine modification. At Thr270 the chain carries Phosphothreonine. Residues 328–368 are disordered; it reads MESAVGNSSGSGQNEESPRKRKKATEAIDSLRKSKRLRNRK. Positions 333–342 are enriched in low complexity; the sequence is GNSSGSGQNE. A Phosphoserine modification is found at Ser344.

Part of a SCF (SKP1-cullin-F-box) protein ligase complex.

Its subcellular location is the chromosome. It localises to the centromere. It is found in the kinetochore. In terms of biological role, probably recognizes and binds to some phosphorylated proteins and promotes their ubiquitination and degradation. This is F-box only protein 28 (FBXO28) from Homo sapiens (Human).